A 547-amino-acid chain; its full sequence is Ganoderic acid synthetase CYP5150L8 (547 aa).

A helical transmembrane segment spans residues 2–22 (PDSSLVLVAIAGAAYIFWLVF). Cys487 lines the heme pocket.

The protein belongs to the cytochrome P450 family. It depends on heme as a cofactor.

The protein resides in the membrane. It carries out the reaction lanosterol + reduced [NADPH--hemoprotein reductase] + O2 = 26-hydroxylanosterol + oxidized [NADPH--hemoprotein reductase] + H2O + H(+). The enzyme catalyses 26-hydroxylanosterol + reduced [NADPH--hemoprotein reductase] + O2 = 26-oxolanosterol + oxidized [NADPH--hemoprotein reductase] + 2 H2O + H(+). The catalysed reaction is 26-oxolanosterol + reduced [NADPH--hemoprotein reductase] + O2 = 3beta-hydroxy-lanosta-8, 24-dien-26-oate + oxidized [NADPH--hemoprotein reductase] + H2O + 2 H(+). Its pathway is secondary metabolite biosynthesis; terpenoid biosynthesis. In terms of biological role, cytochrome P450 monooxygenase that is involved in the biosynthesis of ganoderic acids (GA), a group of highly oxygenated lanostane-type triterpenoids which well recognized as a main group of unique bioactive compounds in the medicinal mushroom Ganoderma lucidum. CYP5150L8 alone is able to catalyze the three-step oxidations at C-26 from lanosterol to 3-hydroxy-lanosta-8,24-dien-26-oic acid (also called ganoderic acid Z or HLDOA). The methyl group of lanosterol at C-26 is first oxidized into hydroxyl group to form 3-hydroxy-lanosta-8,24-dien-26-ol (HLDO). The hydroxyl group at C-26 of HLDO is further converted into a formyl group to form 3-hydroxy-lanosta-8,24-dien-26-al (HLDA). Finally, the formyl group is oxidized into a carboxyl group to produce 3-hydroxy-lanosta-8,24-dien-26-oic acid (HLDOA). The protein is Ganoderic acid synthetase CYP5150L8 of Ganoderma lucidum (Ling zhi medicinal fungus).